The primary structure comprises 325 residues: Small ribosomal subunit protein RACK1 (325 aa).

WD repeat units follow at residues 13 to 44 (AHTDVVTAIATPIDNSDMIVTASRDKSIILWH), 61 to 91 (GHSHFVQDVVLSSDGQFALSGSWDGELRLWD), 103 to 133 (GHTKDVLSVAFSIDNRQIVSASRDRTIKLWN), 147 to 179 (AHSDWVSCVRFSPSTPQPTIVSASWDRTVKVWN), 191 to 221 (GHSGYVNTVAVSPDGSLCASGGKDGVILLWD), 232 to 261 (DAGSIIHALCFSPNRYWLCAATESSIKIWD), and 291 to 321 (KKVIYCTSLNWSADGSTLFSGYTDGVVRVWG).

This sequence belongs to the WD repeat G protein beta family. Ribosomal protein RACK1 subfamily.

Plays a role in hormone-mediated cell division. The sequence is that of Small ribosomal subunit protein RACK1 (GB1) from Medicago sativa (Alfalfa).